The sequence spans 66 residues: Large ribosomal subunit protein bL35 (66 aa).

Basic residues-rich tracts occupy residues 1–16 and 23–45; these read MPKF…RFKR and KRSH…RQLR. The tract at residues 1–66 is disordered; that stretch reads MPKFKTHRAS…RIRQMLSGLK (66 aa).

This sequence belongs to the bacterial ribosomal protein bL35 family.

The polypeptide is Large ribosomal subunit protein bL35 (Latilactobacillus sakei subsp. sakei (strain 23K) (Lactobacillus sakei subsp. sakei)).